The following is a 189-amino-acid chain: MPLVELLTSAALGLSLQLLHDAIIRAKERSLITRCILDRLDATLHKITPFVIKIDTLTEEVDEPFRKVIEELKRLLEKAIRLVDAYAELKLRNLLRKYRYKRRIKELDSSLRWMIDVDVQVNQWLDIKKLMGKMSEMNTKLDDITRQPMDIIEATGRSSEEDGCTKPTIDIHFRWKNQTKEHEIRFIFK.

Positions 1–153 (MPLVELLTSA…ITRQPMDIIE (153 aa)) constitute an RPW8 domain. Residues 7–24 (LTSAALGLSLQLLHDAII) form a helical membrane-spanning segment. 2 coiled-coil regions span residues 65-92 (FRKV…LKLR) and 126-147 (DIKK…ITRQ). An N-linked (GlcNAc...) asparagine glycan is attached at asparagine 177.

The protein belongs to the plant RPW8 protein family.

The protein localises to the membrane. Probable disease resistance (R) protein. This chain is RPW8-like protein 1, found in Arabidopsis thaliana (Mouse-ear cress).